Here is a 140-residue protein sequence, read N- to C-terminus: Small ribosomal subunit protein bS6 (140 aa).

The tract at residues 96–140 (VTGQSEMLKAEENRSERRERRDRPEHEGADSADSDDSDNSDNADE) is disordered. The span at 103–124 (LKAEENRSERRERRDRPEHEGA) shows a compositional bias: basic and acidic residues. Positions 125–140 (DSADSDDSDNSDNADE) are enriched in acidic residues.

This sequence belongs to the bacterial ribosomal protein bS6 family.

Its function is as follows. Binds together with bS18 to 16S ribosomal RNA. The chain is Small ribosomal subunit protein bS6 from Pseudomonas fluorescens (strain SBW25).